The primary structure comprises 65 residues: Large ribosomal subunit protein bL35 (65 aa).

This sequence belongs to the bacterial ribosomal protein bL35 family.

The protein is Large ribosomal subunit protein bL35 of Desulfitobacterium hafniense (strain DSM 10664 / DCB-2).